Here is a 464-residue protein sequence, read N- to C-terminus: Arginine biosynthesis bifunctional protein ArgJ, chloroplastic (464 aa).

Thr208, Lys234, Thr245, Glu332, Asn459, and Thr464 together coordinate substrate. Thr245 serves as the catalytic Nucleophile.

Belongs to the ArgJ family. As to quaternary structure, heterodimer of an alpha and a beta chain.

It is found in the plastid. The protein localises to the chloroplast. It catalyses the reaction N(2)-acetyl-L-ornithine + L-glutamate = N-acetyl-L-glutamate + L-ornithine. The enzyme catalyses L-glutamate + acetyl-CoA = N-acetyl-L-glutamate + CoA + H(+). The protein operates within amino-acid biosynthesis; L-arginine biosynthesis; L-ornithine and N-acetyl-L-glutamate from L-glutamate and N(2)-acetyl-L-ornithine (cyclic): step 1/1. Its pathway is amino-acid biosynthesis; L-arginine biosynthesis; N(2)-acetyl-L-ornithine from L-glutamate: step 1/4. Functionally, catalyzes two activities which are involved in the cyclic version of arginine biosynthesis: the synthesis of acetylglutamate from glutamate and acetyl-CoA, and of ornithine by transacetylation between acetylornithine and glutamate. This Sorghum bicolor (Sorghum) protein is Arginine biosynthesis bifunctional protein ArgJ, chloroplastic.